An 820-amino-acid polypeptide reads, in one-letter code: Leucine--tRNA ligase (820 aa).

The short motif at 42 to 52 is the 'HIGH' region element; that stretch reads PYPSGDLHMGH. The 'KMSKS' region signature appears at 576 to 580; that stretch reads KMSKS. Lysine 579 contributes to the ATP binding site.

This sequence belongs to the class-I aminoacyl-tRNA synthetase family.

It is found in the cytoplasm. It carries out the reaction tRNA(Leu) + L-leucine + ATP = L-leucyl-tRNA(Leu) + AMP + diphosphate. The chain is Leucine--tRNA ligase from Coxiella burnetii (strain CbuG_Q212) (Coxiella burnetii (strain Q212)).